A 261-amino-acid chain; its full sequence is Cytochrome c oxidase subunit 3 (261 aa).

Over 1 to 15 (MTHQTHAYHMVNPSP) the chain is Mitochondrial matrix. The chain crosses the membrane as a helical span at residues 16–34 (WPLTGALSALLMTSGLIMW). Residues 35-40 (FHYNSM) lie on the Mitochondrial intermembrane side of the membrane. Residues 41–66 (SLLTLGFTTNLLTMYQWWRDVIREGT) traverse the membrane as a helical segment. The Mitochondrial matrix portion of the chain corresponds to 67–72 (FQGHHT). The chain crosses the membrane as a helical span at residues 73–105 (PIVQKGLRYGMVLFIVSEVFFFAGFFWAFYHSS). Residues 106-128 (LAPTPELGGCWPPTGIIPLNPLE) are Mitochondrial intermembrane-facing. Residues 129–152 (VPLLNTSVLLASGVSITWAHHSLM) traverse the membrane as a helical segment. Topologically, residues 153-155 (EGN) are mitochondrial matrix. Residues 156 to 183 (RKHMLQALFITISLGVYFTLLQASEYYE) traverse the membrane as a helical segment. Over 184 to 190 (TSFTISD) the chain is Mitochondrial intermembrane. The helical transmembrane segment at 191 to 223 (GVYGSTFFMATGFHGLHVIIGSTFLIVCFLRQL) threads the bilayer. Residues 224–232 (YYHFTSNHH) lie on the Mitochondrial matrix side of the membrane. The chain crosses the membrane as a helical span at residues 233-256 (FGFEAAAWYWHFVDVVWLFLYVSI). At 257–261 (YWWGS) the chain is on the mitochondrial intermembrane side.

This sequence belongs to the cytochrome c oxidase subunit 3 family. Component of the cytochrome c oxidase (complex IV, CIV), a multisubunit enzyme composed of 14 subunits. The complex is composed of a catalytic core of 3 subunits MT-CO1, MT-CO2 and MT-CO3, encoded in the mitochondrial DNA, and 11 supernumerary subunits COX4I, COX5A, COX5B, COX6A, COX6B, COX6C, COX7A, COX7B, COX7C, COX8 and NDUFA4, which are encoded in the nuclear genome. The complex exists as a monomer or a dimer and forms supercomplexes (SCs) in the inner mitochondrial membrane with NADH-ubiquinone oxidoreductase (complex I, CI) and ubiquinol-cytochrome c oxidoreductase (cytochrome b-c1 complex, complex III, CIII), resulting in different assemblies (supercomplex SCI(1)III(2)IV(1) and megacomplex MCI(2)III(2)IV(2)).

It is found in the mitochondrion inner membrane. The enzyme catalyses 4 Fe(II)-[cytochrome c] + O2 + 8 H(+)(in) = 4 Fe(III)-[cytochrome c] + 2 H2O + 4 H(+)(out). In terms of biological role, component of the cytochrome c oxidase, the last enzyme in the mitochondrial electron transport chain which drives oxidative phosphorylation. The respiratory chain contains 3 multisubunit complexes succinate dehydrogenase (complex II, CII), ubiquinol-cytochrome c oxidoreductase (cytochrome b-c1 complex, complex III, CIII) and cytochrome c oxidase (complex IV, CIV), that cooperate to transfer electrons derived from NADH and succinate to molecular oxygen, creating an electrochemical gradient over the inner membrane that drives transmembrane transport and the ATP synthase. Cytochrome c oxidase is the component of the respiratory chain that catalyzes the reduction of oxygen to water. Electrons originating from reduced cytochrome c in the intermembrane space (IMS) are transferred via the dinuclear copper A center (CU(A)) of subunit 2 and heme A of subunit 1 to the active site in subunit 1, a binuclear center (BNC) formed by heme A3 and copper B (CU(B)). The BNC reduces molecular oxygen to 2 water molecules using 4 electrons from cytochrome c in the IMS and 4 protons from the mitochondrial matrix. This chain is Cytochrome c oxidase subunit 3 (MT-CO3), found in Canis lupus (Gray wolf).